We begin with the raw amino-acid sequence, 214 residues long: Pyridoxine/pyridoxamine 5'-phosphate oxidase (214 aa).

Residues 9–12 (RKDY) and K67 each bind substrate. FMN contacts are provided by residues 62 to 67 (RMVLLK), 77 to 78 (FT), R83, K84, and Q106. Positions 124, 128, and 132 each coordinate substrate. FMN-binding positions include 141 to 142 (QS) and W186. Residue 192–194 (RLH) coordinates substrate. R196 is a binding site for FMN.

Belongs to the pyridoxamine 5'-phosphate oxidase family. In terms of assembly, homodimer. FMN serves as cofactor.

The enzyme catalyses pyridoxamine 5'-phosphate + O2 + H2O = pyridoxal 5'-phosphate + H2O2 + NH4(+). It carries out the reaction pyridoxine 5'-phosphate + O2 = pyridoxal 5'-phosphate + H2O2. It participates in cofactor metabolism; pyridoxal 5'-phosphate salvage; pyridoxal 5'-phosphate from pyridoxamine 5'-phosphate: step 1/1. Its pathway is cofactor metabolism; pyridoxal 5'-phosphate salvage; pyridoxal 5'-phosphate from pyridoxine 5'-phosphate: step 1/1. In terms of biological role, catalyzes the oxidation of either pyridoxine 5'-phosphate (PNP) or pyridoxamine 5'-phosphate (PMP) into pyridoxal 5'-phosphate (PLP). The protein is Pyridoxine/pyridoxamine 5'-phosphate oxidase of Nostoc punctiforme (strain ATCC 29133 / PCC 73102).